Reading from the N-terminus, the 89-residue chain is MAISKEKKNEIIAQYARHEGDTGSVEVQVAVLTWEINHLNEHIKQHKKDHATYRGLMKKIGRRRNLLAYLRKNDVNRYRELINSLGLRR.

The protein belongs to the universal ribosomal protein uS15 family. As to quaternary structure, part of the 30S ribosomal subunit. Forms a bridge to the 50S subunit in the 70S ribosome, contacting the 23S rRNA.

One of the primary rRNA binding proteins, it binds directly to 16S rRNA where it helps nucleate assembly of the platform of the 30S subunit by binding and bridging several RNA helices of the 16S rRNA. In terms of biological role, forms an intersubunit bridge (bridge B4) with the 23S rRNA of the 50S subunit in the ribosome. The polypeptide is Small ribosomal subunit protein uS15 (Streptococcus pneumoniae (strain P1031)).